The following is a 203-amino-acid chain: ATP-dependent Clp protease proteolytic subunit (203 aa).

Ser-107 (nucleophile) is an active-site residue. Residue His-132 is part of the active site.

This sequence belongs to the peptidase S14 family. In terms of assembly, fourteen ClpP subunits assemble into 2 heptameric rings which stack back to back to give a disk-like structure with a central cavity, resembling the structure of eukaryotic proteasomes.

The protein localises to the cytoplasm. The catalysed reaction is Hydrolysis of proteins to small peptides in the presence of ATP and magnesium. alpha-casein is the usual test substrate. In the absence of ATP, only oligopeptides shorter than five residues are hydrolyzed (such as succinyl-Leu-Tyr-|-NHMec, and Leu-Tyr-Leu-|-Tyr-Trp, in which cleavage of the -Tyr-|-Leu- and -Tyr-|-Trp bonds also occurs).. Cleaves peptides in various proteins in a process that requires ATP hydrolysis. Has a chymotrypsin-like activity. Plays a major role in the degradation of misfolded proteins. The polypeptide is ATP-dependent Clp protease proteolytic subunit (Shewanella halifaxensis (strain HAW-EB4)).